The sequence spans 330 residues: Solute carrier family 25 member 16 (330 aa).

3 Solcar repeats span residues phenylalanine 32–leucine 118, serine 126–valine 214, and leucine 236–phenylalanine 326. 6 helical membrane passes run tyrosine 33 to valine 52, glycine 95 to phenylalanine 112, leucine 132 to leucine 149, glycine 189 to glycine 209, leucine 242 to threonine 262, and glycine 297 to phenylalanine 317.

It belongs to the mitochondrial carrier (TC 2.A.29) family. Mostly in thyroid, liver, lung, kidney and to a lesser extent in heart and skeletal muscle.

It localises to the mitochondrion inner membrane. May be involved in the transport of coenzyme A in the mitochondrial matrix. Very little is known about the physiological function of this carrier. The protein is Solute carrier family 25 member 16 (SLC25A16) of Bos taurus (Bovine).